Consider the following 149-residue polypeptide: SsrA-binding protein (149 aa).

Belongs to the SmpB family.

The protein localises to the cytoplasm. Its function is as follows. Required for rescue of stalled ribosomes mediated by trans-translation. Binds to transfer-messenger RNA (tmRNA), required for stable association of tmRNA with ribosomes. tmRNA and SmpB together mimic tRNA shape, replacing the anticodon stem-loop with SmpB. tmRNA is encoded by the ssrA gene; the 2 termini fold to resemble tRNA(Ala) and it encodes a 'tag peptide', a short internal open reading frame. During trans-translation Ala-aminoacylated tmRNA acts like a tRNA, entering the A-site of stalled ribosomes, displacing the stalled mRNA. The ribosome then switches to translate the ORF on the tmRNA; the nascent peptide is terminated with the 'tag peptide' encoded by the tmRNA and targeted for degradation. The ribosome is freed to recommence translation, which seems to be the essential function of trans-translation. The chain is SsrA-binding protein from Fervidobacterium nodosum (strain ATCC 35602 / DSM 5306 / Rt17-B1).